The sequence spans 341 residues: Ribosomal RNA small subunit methyltransferase C (341 aa).

This sequence belongs to the methyltransferase superfamily. RsmC family. In terms of assembly, monomer.

Its subcellular location is the cytoplasm. It carries out the reaction guanosine(1207) in 16S rRNA + S-adenosyl-L-methionine = N(2)-methylguanosine(1207) in 16S rRNA + S-adenosyl-L-homocysteine + H(+). In terms of biological role, specifically methylates the guanine in position 1207 of 16S rRNA in the 30S particle. The polypeptide is Ribosomal RNA small subunit methyltransferase C (Vibrio parahaemolyticus serotype O3:K6 (strain RIMD 2210633)).